A 1052-amino-acid chain; its full sequence is Error-prone DNA polymerase (1052 aa).

Belongs to the DNA polymerase type-C family. DnaE2 subfamily.

Its subcellular location is the cytoplasm. It catalyses the reaction DNA(n) + a 2'-deoxyribonucleoside 5'-triphosphate = DNA(n+1) + diphosphate. Functionally, DNA polymerase involved in damage-induced mutagenesis and translesion synthesis (TLS). It is not the major replicative DNA polymerase. The chain is Error-prone DNA polymerase from Bordetella parapertussis (strain 12822 / ATCC BAA-587 / NCTC 13253).